Reading from the N-terminus, the 272-residue chain is L-aspartate dehydrogenase 3 (272 aa).

The NAD(+) site is built by Ala126 and Asn194. The active site involves His224.

Belongs to the L-aspartate dehydrogenase family.

The enzyme catalyses L-aspartate + NADP(+) + H2O = oxaloacetate + NH4(+) + NADPH + H(+). It catalyses the reaction L-aspartate + NAD(+) + H2O = oxaloacetate + NH4(+) + NADH + H(+). It participates in cofactor biosynthesis; NAD(+) biosynthesis; iminoaspartate from L-aspartate (dehydrogenase route): step 1/1. Specifically catalyzes the NAD or NADP-dependent dehydrogenation of L-aspartate to iminoaspartate. This Bordetella bronchiseptica (strain ATCC BAA-588 / NCTC 13252 / RB50) (Alcaligenes bronchisepticus) protein is L-aspartate dehydrogenase 3.